The sequence spans 894 residues: Protein translocase subunit SecA (894 aa).

ATP is bound by residues Gln87, 105 to 109 (GEGKT), and Asp512. The interval 857 to 894 (FNLGDEPEAQQPVTSKKVGRNEPCPCGSGKKYKQCCGK) is disordered. Zn(2+) contacts are provided by Cys880, Cys882, Cys891, and Cys892.

It belongs to the SecA family. As to quaternary structure, monomer and homodimer. Part of the essential Sec protein translocation apparatus which comprises SecA, SecYEG and auxiliary proteins SecDF-YajC and YidC. The cofactor is Zn(2+).

It is found in the cell inner membrane. Its subcellular location is the cytoplasm. The catalysed reaction is ATP + H2O + cellular proteinSide 1 = ADP + phosphate + cellular proteinSide 2.. In terms of biological role, part of the Sec protein translocase complex. Interacts with the SecYEG preprotein conducting channel. Has a central role in coupling the hydrolysis of ATP to the transfer of proteins into and across the cell membrane, serving as an ATP-driven molecular motor driving the stepwise translocation of polypeptide chains across the membrane. This Geotalea uraniireducens (strain Rf4) (Geobacter uraniireducens) protein is Protein translocase subunit SecA.